Consider the following 271-residue polypeptide: Phosphatidylglycerol--prolipoprotein diacylglyceryl transferase (271 aa).

7 helical membrane-spanning segments follow: residues 25–45, 60–80, 103–123, 134–154, 181–201, 209–229, and 235–255; these read WYGIMYDVALLLALLLAKFFV, YFIWVEIGVILGARLGYILIY, FVGIRGMSYHGAIIGFLIATL, WIFLDLVALSVPLAYVFGRIG, PSQFYEAFLEGIVVFIIVYLA, GELILVYAGAYSLARFICEFY, and GIGFVLWGMSMGQILSFIMFI. Arg152 is a binding site for a 1,2-diacyl-sn-glycero-3-phospho-(1'-sn-glycerol).

This sequence belongs to the Lgt family.

It localises to the cell inner membrane. The catalysed reaction is L-cysteinyl-[prolipoprotein] + a 1,2-diacyl-sn-glycero-3-phospho-(1'-sn-glycerol) = an S-1,2-diacyl-sn-glyceryl-L-cysteinyl-[prolipoprotein] + sn-glycerol 1-phosphate + H(+). The protein operates within protein modification; lipoprotein biosynthesis (diacylglyceryl transfer). Its function is as follows. Catalyzes the transfer of the diacylglyceryl group from phosphatidylglycerol to the sulfhydryl group of the N-terminal cysteine of a prolipoprotein, the first step in the formation of mature lipoproteins. In Campylobacter jejuni subsp. doylei (strain ATCC BAA-1458 / RM4099 / 269.97), this protein is Phosphatidylglycerol--prolipoprotein diacylglyceryl transferase.